A 270-amino-acid polypeptide reads, in one-letter code: Glutamate 5-kinase (270 aa).

An ATP-binding site is contributed by Lys17. Ser57, Asp144, and Asn160 together coordinate substrate. ATP-binding positions include 180 to 181 (SD) and 222 to 228 (TGGMTSK).

This sequence belongs to the glutamate 5-kinase family.

It localises to the cytoplasm. The enzyme catalyses L-glutamate + ATP = L-glutamyl 5-phosphate + ADP. Its pathway is amino-acid biosynthesis; L-proline biosynthesis; L-glutamate 5-semialdehyde from L-glutamate: step 1/2. Functionally, catalyzes the transfer of a phosphate group to glutamate to form L-glutamate 5-phosphate. This is Glutamate 5-kinase from Lactococcus lactis subsp. lactis (strain IL1403) (Streptococcus lactis).